The following is a 141-amino-acid chain: Large ribosomal subunit protein uL11 (141 aa).

This sequence belongs to the universal ribosomal protein uL11 family. Part of the ribosomal stalk of the 50S ribosomal subunit. Interacts with L10 and the large rRNA to form the base of the stalk. L10 forms an elongated spine to which L12 dimers bind in a sequential fashion forming a multimeric L10(L12)X complex. Post-translationally, one or more lysine residues are methylated.

In terms of biological role, forms part of the ribosomal stalk which helps the ribosome interact with GTP-bound translation factors. The chain is Large ribosomal subunit protein uL11 from Synechococcus sp. (strain RCC307).